The chain runs to 819 residues: THO complex subunit 5B (819 aa).

Positions A285 to D332 are disordered.

Belongs to the THOC5 family. In terms of assembly, component of the THO complex, which is composed of THO1, THO2, THO3, THO5, THO6 and THO7.

It localises to the nucleus. In terms of biological role, acts as a component of the THO subcomplex of the TREX complex which is thought to couple mRNA transcription, processing and nuclear export. The sequence is that of THO complex subunit 5B (THO5B) from Arabidopsis thaliana (Mouse-ear cress).